The following is a 410-amino-acid chain: Bifunctional enzyme IspD/IspF (410 aa).

Residues 1 to 257 (MSHDPVVPSA…AGAGSASSRL (257 aa)) are 2-C-methyl-D-erythritol 4-phosphate cytidylyltransferase. The 2-C-methyl-D-erythritol 2,4-cyclodiphosphate synthase stretch occupies residues 258–410 (RSGIGTDVHA…AVATALVERL (153 aa)). A divalent metal cation contacts are provided by D264 and H266. Residues 264–266 (DVH) and 290–291 (HS) each bind 4-CDP-2-C-methyl-D-erythritol 2-phosphate. H298 is an a divalent metal cation binding site. 4-CDP-2-C-methyl-D-erythritol 2-phosphate contacts are provided by residues 312 to 314 (DIG), 385 to 388 (TTTD), F392, and R395.

The protein in the N-terminal section; belongs to the IspD/TarI cytidylyltransferase family. IspD subfamily. This sequence in the C-terminal section; belongs to the IspF family. It depends on a divalent metal cation as a cofactor.

It carries out the reaction 2-C-methyl-D-erythritol 4-phosphate + CTP + H(+) = 4-CDP-2-C-methyl-D-erythritol + diphosphate. The catalysed reaction is 4-CDP-2-C-methyl-D-erythritol 2-phosphate = 2-C-methyl-D-erythritol 2,4-cyclic diphosphate + CMP. The protein operates within isoprenoid biosynthesis; isopentenyl diphosphate biosynthesis via DXP pathway; isopentenyl diphosphate from 1-deoxy-D-xylulose 5-phosphate: step 2/6. It functions in the pathway isoprenoid biosynthesis; isopentenyl diphosphate biosynthesis via DXP pathway; isopentenyl diphosphate from 1-deoxy-D-xylulose 5-phosphate: step 4/6. Functionally, bifunctional enzyme that catalyzes the formation of 4-diphosphocytidyl-2-C-methyl-D-erythritol from CTP and 2-C-methyl-D-erythritol 4-phosphate (MEP) (IspD), and catalyzes the conversion of 4-diphosphocytidyl-2-C-methyl-D-erythritol 2-phosphate (CDP-ME2P) to 2-C-methyl-D-erythritol 2,4-cyclodiphosphate (ME-CPP) with a corresponding release of cytidine 5-monophosphate (CMP) (IspF). This Clavibacter michiganensis subsp. michiganensis (strain NCPPB 382) protein is Bifunctional enzyme IspD/IspF.